The following is a 138-amino-acid chain: Small ribosomal subunit protein uS17 (138 aa).

Composition is skewed to basic and acidic residues over residues 1-18 (MSEEERNRGAEPEERAEA) and 43-55 (AFDRDAGKVQKDT). The disordered stretch occupies residues 1 to 62 (MSEEERNRGA…KDTRRGRRKE (62 aa)).

This sequence belongs to the universal ribosomal protein uS17 family. Part of the 30S ribosomal subunit.

One of the primary rRNA binding proteins, it binds specifically to the 5'-end of 16S ribosomal RNA. The sequence is that of Small ribosomal subunit protein uS17 from Rubrobacter xylanophilus (strain DSM 9941 / JCM 11954 / NBRC 16129 / PRD-1).